The primary structure comprises 570 residues: MLKNPATKYRPFPAIALADRTWPNKTITRAPIWMSTDLRDGNQALFEPMNAERKMRMFKMLVQIGFKEIEAAFPAASQTDFDFVRELIEGGHIPDGVAIEVLTQAREDLIRRTMESLRGAKRAIIHVYNATAPVFRRTVFNTDREGVKRIAVQSAKLIREIAQTMPETQWTYQYSPEVFSGTELDFALEVCNAVTEVWEPTPEHKIIFNLPATVEMATPNIYADQIEWMHRNLARRDSIILSVHPHNDRGTAVAAAELAVMAGADRVEGCLFGNGERTGNVDIVTLALNLYSQGVDPELDFSHINDVARTCEDCTQLPVHPRHPYVGDLVFTAFSGSHQDAIKKGFAVQKPDAPWEMPYLPIDPADVGRTYDSIIRVNSQSGKGGIAYLLESGYGVAMPRRLQVEFSSTVQKLTDASGREATGADIWALFQQTYLRSDGAIGYVSHRLTERDDGSQHIRLVVNIDDHEHICEGSGNGPLDALVHALSHVLTAPVSIHHYEERALGQGANADAIAFAELAATGVAGSVFGVGVDANLTTASIRAVVGGVNRLIARTGQGMLRRSSAQATVA.

The 275-residue stretch at 31 to 305 (PIWMSTDLRD…DPELDFSHIN (275 aa)) folds into the Pyruvate carboxyltransferase domain. 4 residues coordinate Mg(2+): aspartate 40, histidine 244, histidine 246, and asparagine 280. Residues 437-570 (SDGAIGYVSH…RRSSAQATVA (134 aa)) are regulatory domain.

Belongs to the alpha-IPM synthase/homocitrate synthase family. LeuA type 2 subfamily. As to quaternary structure, homodimer. Mg(2+) is required as a cofactor.

The protein localises to the cytoplasm. It carries out the reaction 3-methyl-2-oxobutanoate + acetyl-CoA + H2O = (2S)-2-isopropylmalate + CoA + H(+). Its pathway is amino-acid biosynthesis; L-leucine biosynthesis; L-leucine from 3-methyl-2-oxobutanoate: step 1/4. Functionally, catalyzes the condensation of the acetyl group of acetyl-CoA with 3-methyl-2-oxobutanoate (2-ketoisovalerate) to form 3-carboxy-3-hydroxy-4-methylpentanoate (2-isopropylmalate). In Ralstonia pickettii (strain 12J), this protein is 2-isopropylmalate synthase.